Here is a 192-residue protein sequence, read N- to C-terminus: Ion-translocating oxidoreductase complex subunit A (192 aa).

6 helical membrane passes run leucine 5–leucine 25, isoleucine 39–valine 59, leucine 65–valine 85, alanine 102–leucine 122, alanine 134–methionine 154, and alanine 171–valine 191.

It belongs to the NqrDE/RnfAE family. The complex is composed of six subunits: RnfA, RnfB, RnfC, RnfD, RnfE and RnfG.

The protein resides in the cell inner membrane. Functionally, part of a membrane-bound complex that couples electron transfer with translocation of ions across the membrane. The polypeptide is Ion-translocating oxidoreductase complex subunit A (Shewanella sp. (strain ANA-3)).